Here is a 579-residue protein sequence, read N- to C-terminus: Insulin-like growth factor 2 mRNA-binding protein 3 (579 aa).

2 RRM domains span residues 2–75 (NKLY…HSVP) and 81–156 (RKLQ…YIPD). The disordered stretch occupies residues 158–192 (TAAQQNPSPQLRGRRGPGQRGSSRQASPGSVSKQK). Serine 165 bears the Phosphoserine mark. Serine 184 carries the phosphoserine; by MTOR modification. 3 KH domains span residues 195 to 260 (DLPL…CKSI), 276 to 343 (EIPL…EEEI), and 405 to 470 (TETV…QGRI). Residues lysine 450 and lysine 475 each participate in a glycyl lysine isopeptide (Lys-Gly) (interchain with G-Cter in SUMO2) cross-link. The KH 4 domain occupies 487–553 (KLEAHIRVPS…YACQVAQRKI (67 aa)). At threonine 528 the chain carries Phosphothreonine.

It belongs to the RRM IMP/VICKZ family. In terms of assembly, can form homooligomers and heterooligomers with IGF2BP1 and IGF2BP3 in an RNA-dependent manner. Interacts with IGF2BP1. Interacts with ELAVL1, DHX9, HNRNPU, MATR3 and PABPC1. As to expression, expressed in oocytes, spermatogonia and spermatocytes (at protein level).

It localises to the nucleus. Its subcellular location is the cytoplasm. It is found in the P-body. The protein localises to the stress granule. RNA-binding factor that may recruit target transcripts to cytoplasmic protein-RNA complexes (mRNPs). This transcript 'caging' into mRNPs allows mRNA transport and transient storage. It also modulates the rate and location at which target transcripts encounter the translational apparatus and shields them from endonuclease attacks or microRNA-mediated degradation. Preferentially binds to N6-methyladenosine (m6A)-containing mRNAs and increases their stability. Binds to the 3'-UTR of CD44 mRNA and stabilizes it, hence promotes cell adhesion and invadopodia formation. Binds to beta-actin/ACTB and MYC transcripts. Increases MYC mRNA stability by binding to the coding region instability determinant (CRD) and binding is enhanced by m6A-modification of the CRD. Binds to the 5'-UTR of the insulin-like growth factor 2 (IGF2) mRNAs. The sequence is that of Insulin-like growth factor 2 mRNA-binding protein 3 (Igf2bp3) from Mus musculus (Mouse).